A 225-amino-acid chain; its full sequence is ATP-dependent Clp protease proteolytic subunit (225 aa).

Catalysis depends on Ser-123, which acts as the Nucleophile. The active site involves His-148.

This sequence belongs to the peptidase S14 family. As to quaternary structure, fourteen ClpP subunits assemble into 2 heptameric rings which stack back to back to give a disk-like structure with a central cavity, resembling the structure of eukaryotic proteasomes.

The protein localises to the cytoplasm. It catalyses the reaction Hydrolysis of proteins to small peptides in the presence of ATP and magnesium. alpha-casein is the usual test substrate. In the absence of ATP, only oligopeptides shorter than five residues are hydrolyzed (such as succinyl-Leu-Tyr-|-NHMec, and Leu-Tyr-Leu-|-Tyr-Trp, in which cleavage of the -Tyr-|-Leu- and -Tyr-|-Trp bonds also occurs).. Cleaves peptides in various proteins in a process that requires ATP hydrolysis. Has a chymotrypsin-like activity. Plays a major role in the degradation of misfolded proteins. The protein is ATP-dependent Clp protease proteolytic subunit of Chlorobium chlorochromatii (strain CaD3).